The following is an 816-amino-acid chain: Nicotine 6-hydroxylase large subunit (816 aa).

Glu745 is a binding site for Mo-molybdopterin cytosine dinucleotide.

This sequence belongs to the xanthine dehydrogenase family. As to quaternary structure, heterotrimer composed of a large subunit (NdhL), a medium subunit (NdhM) and a small subunit (NdhS). The cofactor is Mo-molybdopterin cytosine dinucleotide.

It is found in the cytoplasm. The enzyme catalyses (R)-nicotine + A + H2O = (R)-6-hydroxynicotine + AH2. It catalyses the reaction (S)-nicotine + A + H2O = (S)-6-hydroxynicotine + AH2. It functions in the pathway alkaloid degradation; nicotine degradation; 6-hydroxypseudooxynicotine from nicotine (R-isomer route): step 1/2. It participates in alkaloid degradation; nicotine degradation; 6-hydroxypseudooxynicotine from nicotine (S-isomer route): step 1/2. Its activity is regulated as follows. Nicotine dehydrogenase activity is inhibited by tungsten. In terms of biological role, component of the nicotine 6-hydroxylase, which is involved in the degradation of nicotine. Catalyzes the hydroxylation of the pyridine ring at C6 to form 6-hydroxynicotine. Can use both L-nicotine and D-nicotine. The protein is Nicotine 6-hydroxylase large subunit of Paenarthrobacter nicotinovorans (Arthrobacter nicotinovorans).